Here is a 126-residue protein sequence, read N- to C-terminus: Holo-[acyl-carrier-protein] synthase (126 aa).

Mg(2+) is bound by residues aspartate 8 and glutamate 60.

The protein belongs to the P-Pant transferase superfamily. AcpS family. Mg(2+) is required as a cofactor.

It localises to the cytoplasm. The enzyme catalyses apo-[ACP] + CoA = holo-[ACP] + adenosine 3',5'-bisphosphate + H(+). Functionally, transfers the 4'-phosphopantetheine moiety from coenzyme A to a Ser of acyl-carrier-protein. The chain is Holo-[acyl-carrier-protein] synthase from Ehrlichia canis (strain Jake).